We begin with the raw amino-acid sequence, 222 residues long: Sperm acrosome-associated protein 9 (222 aa).

Positions 164–222 (QHVSEPQAHQESTRGAARPAQAIGTQPRATKHKCRQLTKASLKPRGCSKPPWRPPGGKL) are disordered.

Microtubule inner protein component of sperm flagellar doublet microtubules. Interacts with CABP1 and CALR. Interacts with INCA1. Interacts with microtubules.

The protein resides in the cytoplasm. It is found in the cytoplasmic vesicle. Its subcellular location is the secretory vesicle. The protein localises to the acrosome. It localises to the cytoskeleton. The protein resides in the cilium basal body. It is found in the flagellum axoneme. Its subcellular location is the cilium axoneme. The protein localises to the nucleus. Microtubule inner protein (MIP) part of the dynein-decorated doublet microtubules (DMTs) of multiciliated respiratory cells and the distal singlet microtubules of monoflagellated spermatozoa. Forms an extensive interaction network cross-linking the lumen of axonemal doublet microtubules. The chain is Sperm acrosome-associated protein 9 from Homo sapiens (Human).